The sequence spans 243 residues: 7-carboxy-7-deazaguanine synthase (243 aa).

Substrate contacts are provided by residues 15 to 17 (IQG) and arginine 30. A Radical SAM core domain is found at 21–239 (VIGQKTMFVR…PQLHTLLWGN (219 aa)). Residues cysteine 34, cysteine 38, and cysteine 41 each coordinate [4Fe-4S] cluster. Serine 43 contributes to the Mg(2+) binding site. Serine 81 contacts substrate. Residues glycine 83 and 127-129 (SPK) each bind S-adenosyl-L-methionine.

This sequence belongs to the radical SAM superfamily. 7-carboxy-7-deazaguanine synthase family. In terms of assembly, homodimer. Requires [4Fe-4S] cluster as cofactor. S-adenosyl-L-methionine is required as a cofactor. It depends on Mg(2+) as a cofactor.

The catalysed reaction is 6-carboxy-5,6,7,8-tetrahydropterin + H(+) = 7-carboxy-7-deazaguanine + NH4(+). The protein operates within purine metabolism; 7-cyano-7-deazaguanine biosynthesis. Its function is as follows. Catalyzes the complex heterocyclic radical-mediated conversion of 6-carboxy-5,6,7,8-tetrahydropterin (CPH4) to 7-carboxy-7-deazaguanine (CDG), a step common to the biosynthetic pathways of all 7-deazapurine-containing compounds. The protein is 7-carboxy-7-deazaguanine synthase of Bacillus subtilis (strain 168).